A 437-amino-acid chain; its full sequence is Trigger factor (437 aa).

The PPIase FKBP-type domain occupies 174–260 (GDFVQISFEG…VKSLKKKIFP (87 aa)).

It belongs to the FKBP-type PPIase family. Tig subfamily.

It is found in the cytoplasm. It carries out the reaction [protein]-peptidylproline (omega=180) = [protein]-peptidylproline (omega=0). Its function is as follows. Involved in protein export. Acts as a chaperone by maintaining the newly synthesized protein in an open conformation. Functions as a peptidyl-prolyl cis-trans isomerase. This chain is Trigger factor, found in Koribacter versatilis (strain Ellin345).